The primary structure comprises 151 residues: UPF0735 ACT domain-containing protein SERP1207 (151 aa).

Residues 74-149 (TLILYVNDIV…HVTKVDLISM (76 aa)) form the ACT domain.

The protein belongs to the UPF0735 family.

The chain is UPF0735 ACT domain-containing protein SERP1207 from Staphylococcus epidermidis (strain ATCC 35984 / DSM 28319 / BCRC 17069 / CCUG 31568 / BM 3577 / RP62A).